Consider the following 494-residue polypeptide: Alpha-amylase B (494 aa).

The N-terminal stretch at 1–18 is a signal peptide; the sequence is MFLAKSIVCLALLAVANA. Gln19 is modified (pyrrolidone carboxylic acid). Cysteines 46 and 102 form a disulfide. Ca(2+)-binding residues include Asn116, Arg165, and Asp174. Cysteines 153 and 167 form a disulfide. Arg202 contributes to the chloride binding site. Asp204 functions as the Nucleophile in the catalytic mechanism. His208 contacts Ca(2+). Glu241 (proton donor) is an active-site residue. Asn304 and Arg343 together coordinate chloride. Disulfide bonds link Cys376-Cys382 and Cys448-Cys460.

It belongs to the glycosyl hydrolase 13 family. Monomer. Requires Ca(2+) as cofactor. It depends on chloride as a cofactor.

It catalyses the reaction Endohydrolysis of (1-&gt;4)-alpha-D-glucosidic linkages in polysaccharides containing three or more (1-&gt;4)-alpha-linked D-glucose units.. This Drosophila melanogaster (Fruit fly) protein is Alpha-amylase B (Amy-d).